The primary structure comprises 568 residues: Potassium-transporting ATPase potassium-binding subunit (568 aa).

A run of 12 helical transmembrane segments spans residues 7–27 (LLITSFLLILMLLAKPLGNII), 67–87 (YALAITIFNLTGLLLLFTLLV), 137–157 (GLTVQNFLSAATGIAVAFALI), 180–200 (LYLLLPLSMVIALVFVSQGVI), 258–278 (FIQILSIFLIPCALCFAFGQV), 288–308 (LLWAMSIIFVIATVGVMYAEL), 332–352 (FGILATSIYAVVTTAASCGAV), 361–381 (ALGGMIPMWLIQIGEVVFGGV), 384–404 (GLYGMLLFVLLTVFIAGLMIG), 421–441 (MVALAILVTPTLALLGTALTI), 488–508 (LLLAIILFLGRFGMILPVLAI), and 535–555 (LLILTIMLIGALTFIPALILG).

This sequence belongs to the KdpA family. In terms of assembly, the system is composed of three essential subunits: KdpA, KdpB and KdpC.

It localises to the cell inner membrane. Its function is as follows. Part of the high-affinity ATP-driven potassium transport (or Kdp) system, which catalyzes the hydrolysis of ATP coupled with the electrogenic transport of potassium into the cytoplasm. This subunit binds the periplasmic potassium ions and delivers the ions to the membrane domain of KdpB through an intramembrane tunnel. The protein is Potassium-transporting ATPase potassium-binding subunit of Photorhabdus laumondii subsp. laumondii (strain DSM 15139 / CIP 105565 / TT01) (Photorhabdus luminescens subsp. laumondii).